Here is a 236-residue protein sequence, read N- to C-terminus: uncharacterized protein (236 aa).

A helical transmembrane segment spans residues 15–34; it reads GGMAHIISEAVIAGSIGLYF. A coiled-coil region spans residues 36–71; the sequence is KKISALEQTVQELQSQLEVQNNQLQWLIQQQTRRLA. 2 disordered regions span residues 83–113 and 185–236; these read SPLPPQRDYRQQSTTTNAAGNNGAYPSFQFK and ATTQ…IDCE. Polar residues-rich tracts occupy residues 93 to 102 and 185 to 195; these read QQSTTTNAAG and ATTQVSTFSKP. The segment covering 225-236 has biased composition (basic and acidic residues); that stretch reads ALDKILNDIDCE.

Its subcellular location is the membrane. This is an uncharacterized protein from Aedes vexans (Inland floodwater mosquito).